The following is a 284-amino-acid chain: Small ribosomal subunit protein uS5z (284 aa).

Positions 1-19 are enriched in basic and acidic residues; sequence MAERGGEGGAERGGDRGDF. Residues 1–51 form a disordered region; it reads MAERGGEGGAERGGDRGDFGRGFGGGRGGGRGRDRGPRGRGRRGGRASEET. Residues 20-29 show a composition bias toward gly residues; that stretch reads GRGFGGGRGG. The S5 DRBM domain maps to 95-158; it reads LKDEVMKIMP…ILAKLSVVPV (64 aa).

Belongs to the universal ribosomal protein uS5 family.

In Arabidopsis thaliana (Mouse-ear cress), this protein is Small ribosomal subunit protein uS5z (RPS2A).